A 47-amino-acid polypeptide reads, in one-letter code: Ribosome-inactivating protein luffin P1 (47 aa).

Disulfide bonds link cysteine 12-cysteine 33 and cysteine 16-cysteine 29.

Homotetramer.

It carries out the reaction Endohydrolysis of the N-glycosidic bond at one specific adenosine on the 28S rRNA.. In terms of biological role, inhibits protein synthesis in animal cells. This chain is Ribosome-inactivating protein luffin P1, found in Luffa aegyptiaca (Sponge gourd).